The chain runs to 380 residues: Histidinol-phosphate aminotransferase (380 aa).

Lys232 is subject to N6-(pyridoxal phosphate)lysine.

Belongs to the class-II pyridoxal-phosphate-dependent aminotransferase family. Histidinol-phosphate aminotransferase subfamily. Homodimer. It depends on pyridoxal 5'-phosphate as a cofactor.

The catalysed reaction is L-histidinol phosphate + 2-oxoglutarate = 3-(imidazol-4-yl)-2-oxopropyl phosphate + L-glutamate. It functions in the pathway amino-acid biosynthesis; L-histidine biosynthesis; L-histidine from 5-phospho-alpha-D-ribose 1-diphosphate: step 7/9. This Mycobacterium bovis (strain BCG / Pasteur 1173P2) protein is Histidinol-phosphate aminotransferase.